Reading from the N-terminus, the 1340-residue chain is Lysine-specific demethylase ELF6 (1340 aa).

The 42-residue stretch at 16-57 folds into the JmjN domain; that stretch reads APVFRPTDTEFADPIAYISKIEKEASAFGICKIIPPLPKPSK. The segment at 195 to 245 is disordered; that stretch reads QRKRRGRGFYQRKTENNDPSGKNGEKSSPEVEKAPLASTSLSSQDSSKQKN. Positions 217–227 are enriched in basic and acidic residues; the sequence is NGEKSSPEVEK. Positions 262–428 constitute a JmjC domain; it reads NSSWNLQMIA…VAKEAAVRRA (167 aa). Residues histidine 305, glutamate 307, and histidine 396 each contribute to the Fe cation site. The Nuclear localization signal 1 motif lies at 818-825; that stretch reads GKKEEKII. A disordered region spans residues 1092 to 1225; the sequence is GEPLESSDIL…SRQQEVPTTT (134 aa). Over residues 1099–1115 the composition is skewed to polar residues; sequence DILSSSNGDEASSNGLQ. A compositionally biased stretch (low complexity) spans 1124–1133; the sequence is ESEVSSSENT. Over residues 1188–1201 the composition is skewed to basic and acidic residues; it reads SLKHTETSDEEKKP. Positions 1215–1225 are enriched in polar residues; sequence GSRQQEVPTTT. 4 C2H2-type zinc fingers span residues 1228 to 1250, 1251 to 1275, 1281 to 1305, and 1311 to 1337; these read NRCYLEGCKMTFESKAKLQTHKR, NRCTHEGCGKKFRAHKYLVLHQRVH, FECSWKGCSMTFKWQWARTEHLRLH, and YICKVDGCGLSFRFVSDYSRHRRKTMH. Residues cysteine 1230, cysteine 1235, histidine 1248, cysteine 1253, cysteine 1258, histidine 1265, histidine 1271, histidine 1275, cysteine 1283, cysteine 1288, histidine 1301, histidine 1305, cysteine 1313, cysteine 1318, histidine 1331, and histidine 1337 each contribute to the Zn(2+) site. The Nuclear localization signal 2 signature appears at 1248–1255; that stretch reads HKRNRCTH. A DNA-binding region spans residues 1260–1333; sequence KKFRAHKYLV…FVSDYSRHRR (74 aa).

It belongs to the JHDM3 histone demethylase family. In terms of assembly, interacts with BZR2 (via N-terminus). As to expression, expressed at low levels in seedlings, cotyledons and leaves. Detected in inflorescences, stems, roots and siliques but not in shoot apical meristems or root tips. Accumulates in flowers and embryos.

The protein resides in the nucleus. It carries out the reaction N(6),N(6),N(6)-trimethyl-L-lysyl(27)-[histone H3] + 2-oxoglutarate + O2 = N(6),N(6)-dimethyl-L-lysyl(27)-[histone H3] + formaldehyde + succinate + CO2. It catalyses the reaction N(6),N(6)-dimethyl-L-lysyl(27)-[histone H3] + 2-oxoglutarate + O2 = N(6)-methyl-L-lysyl(27)-[histone H3] + formaldehyde + succinate + CO2. Histone demethylase that demethylates 'Lys-27' (H3K27me) of histone H3, thus acting as a positive regulator of gene expression. Demethylates tri-methylated (H3K27me3) and di-methylated (H3K27me2) H3K27me. Inactive on H3K27me1, H3K4me3, H3K9me2 and H3K36me3. Acts as a repressor of the photoperiodic flowering pathway and of FT. May also be active on H3K4me. Binds around the transcription start site of the FT locus. Required for epigenetic reprogramming by resetting the expression of the floral repressor FLC locus, thus aluviating cold-mediated FLC epigenetically silencing occurring during vernalization and preventing inapropriate epigenetic states inheritence. In terms of biological role, together with REF6, required for H3K27me3 resetting (especially in constitutive heterochromatin within the pericentromeric regions) and transgenerational inheritance of histone marks, thus acting in safeguarding genome and epigenome integrity during sexual reproduction. The polypeptide is Lysine-specific demethylase ELF6 (Arabidopsis thaliana (Mouse-ear cress)).